The sequence spans 431 residues: Histidinol dehydrogenase (431 aa).

NAD(+)-binding residues include Tyr-130, Gln-191, and Asn-214. Residues Ser-237, Gln-259, and His-262 each contribute to the substrate site. The Zn(2+) site is built by Gln-259 and His-262. Catalysis depends on proton acceptor residues Glu-327 and His-328. The substrate site is built by His-328, Asp-361, Glu-415, and His-420. Residue Asp-361 coordinates Zn(2+). Residue His-420 coordinates Zn(2+).

This sequence belongs to the histidinol dehydrogenase family. Zn(2+) serves as cofactor.

It carries out the reaction L-histidinol + 2 NAD(+) + H2O = L-histidine + 2 NADH + 3 H(+). The protein operates within amino-acid biosynthesis; L-histidine biosynthesis; L-histidine from 5-phospho-alpha-D-ribose 1-diphosphate: step 9/9. Its function is as follows. Catalyzes the sequential NAD-dependent oxidations of L-histidinol to L-histidinaldehyde and then to L-histidine. This chain is Histidinol dehydrogenase, found in Bradyrhizobium diazoefficiens (strain JCM 10833 / BCRC 13528 / IAM 13628 / NBRC 14792 / USDA 110).